We begin with the raw amino-acid sequence, 77 residues long: Apelin (77 aa).

The first 22 residues, M1–G22, serve as a signal peptide directing secretion. Residues G23–H41 constitute a propeptide that is removed on maturation. The disordered stretch occupies residues V43–F77. A compositionally biased stretch (basic residues) spans G58 to H71.

The protein belongs to the apelin family. Post-translationally, several active peptides may be produced by proteolytic processing of the peptide precursor. Expressed in the brain with highest levels in the frontal cortex, thalamus, hypothalamus and midbrain. Secreted by the mammary gland into the colostrum and the milk.

It is found in the secreted. The protein resides in the extracellular space. Functionally, peptide hormone that functions as endogenous ligand for the G-protein-coupled apelin receptor (APLNR/APJ), that plays a role in cadiovascular homeostasis. Functions as a balanced agonist activating both G(i) protein pathway and beta-arrestin pathway of APLNR. Downstream G proteins activation, apelin can inhibit cAMP production and activate key intracellular effectors such as ERKs. On the other hand, APLNR activation induces beta-arrestin recruitment to the membrane leading to desensitization and internalization of the receptor. Apelin blunts cardiac hypertrophic induction from APLNR on response to pathological stimuli, but also induces myocardial hypertrophy under normal conditions. Apelin-36 dissociates more hardly than (pyroglu)apelin-13 from APLNR. Involved in the regulation of cardiac precursor cell movements during gastrulation and heart morphogenesis. Has an inhibitory effect on cytokine production in response to T-cell receptor/CD3 cross-linking; the oral intake of apelin in the colostrum and the milk might therefore modulate immune responses in neonates. Plays a role in early coronary blood vessels formation. Mediates myocardial contractility in an ERK1/2-dependent manner. May also have a role in the central control of body fluid homeostasis by influencing vasopressin release and drinking behavior. Its function is as follows. (Microbial infection) Endogenous ligand for the apelin receptor (APLNR), an alternative coreceptor with CD4 for HIV-1 infection. Inhibits HIV-1 entry in cells coexpressing CD4 and APLNR. Apelin-36 has a greater inhibitory activity on HIV infection than other synthetic apelin derivatives. The protein is Apelin of Homo sapiens (Human).